Consider the following 351-residue polypeptide: Histidinol-phosphate aminotransferase (351 aa).

Position 221 is an N6-(pyridoxal phosphate)lysine (Lys-221).

This sequence belongs to the class-II pyridoxal-phosphate-dependent aminotransferase family. Histidinol-phosphate aminotransferase subfamily. As to quaternary structure, homodimer. It depends on pyridoxal 5'-phosphate as a cofactor.

It catalyses the reaction L-histidinol phosphate + 2-oxoglutarate = 3-(imidazol-4-yl)-2-oxopropyl phosphate + L-glutamate. It participates in amino-acid biosynthesis; L-histidine biosynthesis; L-histidine from 5-phospho-alpha-D-ribose 1-diphosphate: step 7/9. The chain is Histidinol-phosphate aminotransferase from Staphylococcus epidermidis (strain ATCC 12228 / FDA PCI 1200).